Consider the following 443-residue polypeptide: Protein king tubby (443 aa).

Disordered regions lie at residues 57–85 (TNGSPGGITPVAVNTSRNHSNNMRSLSTI) and 98–189 (HELE…ESEG). Positions 68–85 (AVNTSRNHSNNMRSLSTI) are enriched in polar residues. Residues 113–128 (QHQQSASHSANSTQSQ) are compositionally biased toward low complexity. Serine 136 carries the phosphoserine modification. Residues 148–160 (NRNVAAAAPVRPA) show a composition bias toward low complexity. Over residues 177–186 (NGTGNGTGGE) the composition is skewed to gly residues.

It belongs to the TUB family.

Its subcellular location is the cytoplasm. It is found in the nucleus. It localises to the cell projection. The protein localises to the cilium membrane. The protein resides in the rhabdomere. The chain is Protein king tubby from Drosophila yakuba (Fruit fly).